A 418-amino-acid polypeptide reads, in one-letter code: Putative ion-transport protein YfeO (418 aa).

Transmembrane regions (helical) follow at residues 9–31, 55–77, 90–112, 122–140, 147–169, 189–211, 223–244, 259–281, 301–323, 343–363, and 376–398; these read MLLLSLPAVAIGIASSLILIVVM, SPLWIIGVLTLTGIAVGLVIRFS, LIGAPVPPSALPGLIVALILGLA, PIMTVNIALAVAIGARLLP, WTILASAGTIGALFGTPVAAALI, PLMAAAAGALTTGLFFHPHFSLP, ILSGAIVAAIAIAAGMVAVWCL, LVLGIGGFILGILGVIGGPVSLF, YFLLAVIKLAALVVAAASGFRGG, VPAVPAAITVSCAILGIVLVV, and VVVPNTTLLPLLCIVMLPAWLLL.

This sequence belongs to the chloride channel (TC 2.A.49) family.

The protein resides in the cell membrane. This chain is Putative ion-transport protein YfeO (yfeO), found in Escherichia coli O157:H7.